A 254-amino-acid polypeptide reads, in one-letter code: Cytokine-inducible SH2-containing protein (254 aa).

In terms of domain architecture, SH2 spans 82–188 (WYWGSITASE…ATTPALPTPK (107 aa)). The disordered stretch occupies residues 171-195 (TRSDSPDLATTPALPTPKEDAPGDP). An SOCS box domain is found at 205–253 (KLVQPFVRRSSTRSLQHLCRLVINRLVVDVDCLPLPRRMADYLRQYPFQ).

In terms of assembly, stably associated with the tyrosine-phosphorylated IL3 receptor beta chain and tyrosine-phosphorylated EPO receptor (EPOR).

Its pathway is protein modification; protein ubiquitination. Its function is as follows. SOCS family proteins form part of a classical negative feedback system that regulates cytokine signal transduction. CIS is involved in the negative regulation of cytokines that signal through the JAK-STAT5 pathway such as erythropoietin, prolactin and interleukin 3 (IL3) receptor. Inhibits STAT5 trans-activation by suppressing its tyrosine phosphorylation. May be a substrate recognition component of a SCF-like ECS (Elongin BC-CUL2/5-SOCS-box protein) E3 ubiquitin-protein ligase complex which mediates the ubiquitination and subsequent proteasomal degradation of target proteins. This chain is Cytokine-inducible SH2-containing protein (CISH), found in Bos taurus (Bovine).